Reading from the N-terminus, the 366-residue chain is UDP-N-acetylglucosamine--N-acetylmuramyl-(pentapeptide) pyrophosphoryl-undecaprenol N-acetylglucosamine transferase (366 aa).

UDP-N-acetyl-alpha-D-glucosamine is bound by residues 17 to 19, N129, R169, S195, I251, 270 to 275, and Q296; these read TGG and ALTVSE.

Belongs to the glycosyltransferase 28 family. MurG subfamily.

The protein resides in the cell inner membrane. It catalyses the reaction di-trans,octa-cis-undecaprenyl diphospho-N-acetyl-alpha-D-muramoyl-L-alanyl-D-glutamyl-meso-2,6-diaminopimeloyl-D-alanyl-D-alanine + UDP-N-acetyl-alpha-D-glucosamine = di-trans,octa-cis-undecaprenyl diphospho-[N-acetyl-alpha-D-glucosaminyl-(1-&gt;4)]-N-acetyl-alpha-D-muramoyl-L-alanyl-D-glutamyl-meso-2,6-diaminopimeloyl-D-alanyl-D-alanine + UDP + H(+). It functions in the pathway cell wall biogenesis; peptidoglycan biosynthesis. Its function is as follows. Cell wall formation. Catalyzes the transfer of a GlcNAc subunit on undecaprenyl-pyrophosphoryl-MurNAc-pentapeptide (lipid intermediate I) to form undecaprenyl-pyrophosphoryl-MurNAc-(pentapeptide)GlcNAc (lipid intermediate II). This Shewanella denitrificans (strain OS217 / ATCC BAA-1090 / DSM 15013) protein is UDP-N-acetylglucosamine--N-acetylmuramyl-(pentapeptide) pyrophosphoryl-undecaprenol N-acetylglucosamine transferase.